A 767-amino-acid chain; its full sequence is Slo-interacting protein 1 (767 aa).

The region spanning 202 to 280 (QQSSTDTNKG…SVTLLVSRIL (79 aa)) is the PDZ domain. Disordered stretches follow at residues 521–557 (GNAA…NPDE) and 744–767 (KEER…QQQQ). A compositionally biased stretch (polar residues) spans 532–555 (NSSSAYNTGDSNNSASPHQNTTNP). Positions 744–755 (KEERKRHIERAR) are enriched in basic and acidic residues.

In terms of assembly, interacts with Slo. As to expression, in embryos, it is expressed throughout the CNS and in several peripheral locations. Colocalizes with Slo.

Its function is as follows. May selectively reduce calcium-activated potassium channel (Slo) currents by reducing the number of Slo channels in the plasma membrane. This Drosophila melanogaster (Fruit fly) protein is Slo-interacting protein 1 (Slip1).